An 840-amino-acid chain; its full sequence is Phosphatidylglycerol lysyltransferase (840 aa).

The Cytoplasmic segment spans residues Met-1 to Lys-8. A helical membrane pass occupies residues Leu-9–Leu-29. Topologically, residues Tyr-30 to Trp-52 are extracellular. A helical membrane pass occupies residues Leu-53–Ile-73. Over Leu-74–Arg-89 the chain is Cytoplasmic. Residues Val-90–Gly-110 form a helical membrane-spanning segment. Topologically, residues Val-111–Tyr-129 are extracellular. Residues Ile-130–Leu-150 form a helical membrane-spanning segment. At Arg-151 to Glu-161 the chain is on the cytoplasmic side. Residues Ile-162 to Tyr-182 traverse the membrane as a helical segment. At Thr-183–Thr-200 the chain is on the extracellular side. Residues Val-201–Val-221 form a helical membrane-spanning segment. Residues Asp-222 to Thr-229 are Cytoplasmic-facing. Residues Phe-230–Phe-250 form a helical membrane-spanning segment. At Gly-251–Lys-270 the chain is on the extracellular side. A helical membrane pass occupies residues Ile-271 to Leu-291. Topologically, residues Ile-292 to Ser-337 are cytoplasmic. Residues Leu-338 to Tyr-358 traverse the membrane as a helical segment. At Asp-359–His-366 the chain is on the extracellular side. Residues Phe-367–Val-387 traverse the membrane as a helical segment. Topologically, residues Arg-388–Lys-392 are cytoplasmic. Residues Gly-393–Ile-413 form a helical membrane-spanning segment. The Extracellular portion of the chain corresponds to Tyr-414 to Thr-415. A helical membrane pass occupies residues Tyr-416 to Tyr-436. The Cytoplasmic segment spans residues Gln-437 to Lys-450. Residues Leu-451–Gly-471 traverse the membrane as a helical segment. The Extracellular segment spans residues Thr-472–Arg-489. Residues Tyr-490–Phe-510 form a helical membrane-spanning segment. At Asp-511–Lys-840 the chain is on the cytoplasmic side.

It belongs to the LPG synthase family.

The protein localises to the cell membrane. The enzyme catalyses L-lysyl-tRNA(Lys) + a 1,2-diacyl-sn-glycero-3-phospho-(1'-sn-glycerol) = a 1,2-diacyl-sn-glycero-3-phospho-1'-(3'-O-L-lysyl)-sn-glycerol + tRNA(Lys). Its function is as follows. Catalyzes the transfer of a lysyl group from L-lysyl-tRNA(Lys) to membrane-bound phosphatidylglycerol (PG), which produces lysylphosphatidylglycerol (LPG), a major component of the bacterial membrane with a positive net charge. LPG synthesis contributes to bacterial virulence as it is involved in the resistance mechanism against cationic antimicrobial peptides (CAMP) produces by the host's immune system (defensins, cathelicidins) and by the competing microorganisms (bacteriocins). In fact, the modification of anionic phosphatidylglycerol with positively charged L-lysine results in repulsion of the peptides. The polypeptide is Phosphatidylglycerol lysyltransferase (mprF) (Staphylococcus epidermidis (strain ATCC 12228 / FDA PCI 1200)).